Here is a 338-residue protein sequence, read N- to C-terminus: Trace amine-associated receptor 1 (338 aa).

The Extracellular segment spans residues 1-24 (MPFCHNIINISCVKNNWSNDVRAS). Intrachain disulfides connect C4-C177, C12-C87, and C95-C181. N-linked (GlcNAc...) asparagine glycans are attached at residues N9 and N16. Residues 25 to 45 (LYSLMALIILTTLVGNLIVIV) traverse the membrane as a helical segment. Residues 46–58 (SISHFKQLHTPTN) are Cytoplasmic-facing. The helical transmembrane segment at 59–79 (WLIHSMATVDFLLGCLVMPYS) threads the bilayer. Over 80 to 97 (MVRSAEHCWYFGEVFCKI) the chain is Extracellular. The helical transmembrane segment at 98–118 (HTSTDIMLSSASIFHLSFISI) threads the bilayer. D102 is a binding site for 2-phenylethylamine. Over 119–135 (DRYYAVCDPLRYKAKIN) the chain is Cytoplasmic. A helical transmembrane segment spans residues 136 to 156 (ILVVCVMIFISWSVPAVFAFG). Over 157-187 (MIFLELNFKGAEEIYYKHVHCRGGCSVFFSK) the chain is Extracellular. The helical transmembrane segment at 188–208 (ISGVLAFMTSFYIPGSIMLCI) threads the bilayer. The Cytoplasmic segment spans residues 209–251 (YYRIYLIAKEQARSINDANQKLQIGLEMKNGISQSKERKAVKT). A helical transmembrane segment spans residues 252–272 (LGIVMGVFLICWCPFFVCTVI). Residues 273–286 (DPFLHYTIPPTLND) are Extracellular-facing. A helical membrane pass occupies residues 287-307 (VLIWFGYLNSTFNPMVYAFFY). The Cytoplasmic segment spans residues 308-338 (PWFRKALKMILFGKIFQKDSSRCKLFLESSS).

Belongs to the G-protein coupled receptor 1 family.

The protein resides in the endomembrane system. The protein localises to the endoplasmic reticulum membrane. Its subcellular location is the cell membrane. Intracellular G-protein coupled receptor for trace amines, which recognizes endogenous amine-containing metabolites such as beta-phenylethylamine (beta-PEA), 3-iodothyronamine (T1AM), isoamylamine (IAA), cadaverine (CAD), cyclohexylamine (CHA), p-tyramine (p-TYR), trimethylamine (TMA), octopamine and tryptamine. Also functions as a receptor for various drugs and psychoactive substances, such as amphetamine and methamphetamine. Unresponsive to classical biogenic amines, such as epinephrine and histamine and only partially activated by dopamine and serotonin. Expressed in both the central and peripheral nervous system: TAAR1 activation regulates the activity of several neurotransmitter signaling pathways by (1) decreasing the basal firing rates of the neurons involved and by (2) lowering the sensitivity of receptors to neurotransmitters. Ligand binding causes a conformation change that triggers signaling via guanine nucleotide-binding proteins (G proteins) and modulates the activity of downstream effectors. TAAR1 is coupled with different G(i)/G(o)-, G(s)- or G(q)/G(11) classes of G alpha proteins depending on the ligand. CAD-binding is coupled to G(i)/G(o) G alpha proteins and mediates inhibition of adenylate cyclase activity. T1AM- or beta-PEA-binding is coupled to G(s) G alpha proteins and mediates activation of adenylate cyclase activity. CHA- or IAA-binding is coupled to G(q)/G(11) G alpha proteins and activates phospholipase C-beta, releasing diacylglycerol (DAG) and inositol 1,4,5-trisphosphate (IP3) second messengers. TMA-binding is coupled with all three G(i)/G(o)-, G(s)- or G(q)/G(11) G alpha protein subtypes. The protein is Trace amine-associated receptor 1 (TAAR1) of Macaca mulatta (Rhesus macaque).